The chain runs to 299 residues: MEELLPDRQVWANMDPEERMLAAATAFTHICAGQGEGDVRREAQSIQYDPYSKASIAPGKRPTLPVQLQYPHVESNVTSETVSEASQRLRKPVMKRKVLRRKPDGEVLVTDESIISESESGTENDQGLWDLRQRLMNVQFQEDKESSFDISQKFNPPHEYQGISQDQLICSLQREGMGSPAYEQDLIVASRPKSFILPKLDQLSRNRGKTDRVARYFEYKRDWDSIRLPGEDHRKELRWGVREQMLCRAEPQSKPQHIYVPNNYLVPTEKKRSALRWGVRCDLANGVIPRKLPFPLSPS.

S179 carries the phosphoserine modification.

The protein belongs to the HYLS1 family.

Its subcellular location is the cytoplasm. It is found in the cell projection. It localises to the cilium. The protein resides in the cytoskeleton. The protein localises to the microtubule organizing center. Its subcellular location is the centrosome. It is found in the centriole. In terms of biological role, plays a role in ciliogenesis. The protein is Centriolar and ciliogenesis-associated protein HYSL1 (HYLS1) of Macaca fascicularis (Crab-eating macaque).